The chain runs to 488 residues: Ribulose bisphosphate carboxylase large chain (488 aa).

Positions 127 and 177 each coordinate substrate. Residue K179 is the Proton acceptor of the active site. K181 lines the substrate pocket. K205, D207, and E208 together coordinate Mg(2+). K205 is subject to N6-carboxylysine. The Proton acceptor role is filled by H297. Substrate is bound by residues R298, H330, and S382.

The protein belongs to the RuBisCO large chain family. Type I subfamily. Heterohexadecamer of 8 large chains and 8 small chains. Mg(2+) serves as cofactor.

It localises to the plastid. The protein localises to the chloroplast. The catalysed reaction is 2 (2R)-3-phosphoglycerate + 2 H(+) = D-ribulose 1,5-bisphosphate + CO2 + H2O. The enzyme catalyses D-ribulose 1,5-bisphosphate + O2 = 2-phosphoglycolate + (2R)-3-phosphoglycerate + 2 H(+). In terms of biological role, ruBisCO catalyzes two reactions: the carboxylation of D-ribulose 1,5-bisphosphate, the primary event in carbon dioxide fixation, as well as the oxidative fragmentation of the pentose substrate in the photorespiration process. Both reactions occur simultaneously and in competition at the same active site. This Pyropia yezoensis (Susabi-nori) protein is Ribulose bisphosphate carboxylase large chain.